We begin with the raw amino-acid sequence, 312 residues long: Ribosomal protein L11 methyltransferase (312 aa).

Residues threonine 162, glycine 183, aspartate 205, and asparagine 248 each coordinate S-adenosyl-L-methionine.

This sequence belongs to the methyltransferase superfamily. PrmA family.

It localises to the cytoplasm. It catalyses the reaction L-lysyl-[protein] + 3 S-adenosyl-L-methionine = N(6),N(6),N(6)-trimethyl-L-lysyl-[protein] + 3 S-adenosyl-L-homocysteine + 3 H(+). Functionally, methylates ribosomal protein L11. In Bacillus cytotoxicus (strain DSM 22905 / CIP 110041 / 391-98 / NVH 391-98), this protein is Ribosomal protein L11 methyltransferase.